A 205-amino-acid chain; its full sequence is Guanylate kinase (205 aa).

The Guanylate kinase-like domain maps to 3–181 (GSLYIISAPS…ALSELHSIFL (179 aa)). 10–17 (APSGAGKT) contributes to the ATP binding site.

The protein belongs to the guanylate kinase family.

The protein localises to the cytoplasm. The catalysed reaction is GMP + ATP = GDP + ADP. Functionally, essential for recycling GMP and indirectly, cGMP. The polypeptide is Guanylate kinase (Hydrogenovibrio crunogenus (strain DSM 25203 / XCL-2) (Thiomicrospira crunogena)).